Consider the following 574-residue polypeptide: MGSEDLERLLLGYALRDAVKHGGRASVGSVMSMLLGDHPELRSRAREIASLAARVVEQVNSMPAGEQKRLLSEQYPELARFEEQREKGDKGLPPLPGAVEGRVKLRFAPNPDFVIHMGNARPAIVNHEYARMYKGRMVLRFEDTDPRTKTPLREAYDLIRQDLKWLGVSWDEEYIQSLRMEVFYSVARRAIERGCAYVDNCGREGKELLSRGEYCPTRDLGPEDNLELFEKMLEGEFYEGEAVVRMKTDPRHPNPSLRDWVAMRIIDTEKHPHPLVGSRYLVWPTYNFAVSVDDHMMEITHVLRGKEHQLNTEKQLAVYRCMGWRPPYFIHFGRLKLEGFILSKSKIRKLLEERPGEFMGYDDPRFGTIAGLRRRGVLAEAIRQIILEVGVKPTDATISWANLAAANRKLLDERADRIMYVEDPVEMEVELAQVECRAAEIPFHPSRPQRKRRITLCTGDKVLLTREDAVEGRQLRLMGLSNFTVSQGILREVDPSLEYARRMKLPIVQWVKKGGEASVEVLEPVELELRRHQGYAEDAIRGYGVDSRLQFVRYGFVRVDSVEDGVYRVIYTHK.

Residues Pro109–Asn119 carry the 'HIGH' region motif.

Belongs to the class-I aminoacyl-tRNA synthetase family. Glutamate--tRNA ligase type 2 subfamily.

It is found in the cytoplasm. The enzyme catalyses tRNA(Glu) + L-glutamate + ATP = L-glutamyl-tRNA(Glu) + AMP + diphosphate. In terms of biological role, catalyzes the attachment of glutamate to tRNA(Glu) in a two-step reaction: glutamate is first activated by ATP to form Glu-AMP and then transferred to the acceptor end of tRNA(Glu). This Aeropyrum pernix (strain ATCC 700893 / DSM 11879 / JCM 9820 / NBRC 100138 / K1) protein is Glutamate--tRNA ligase.